A 276-amino-acid polypeptide reads, in one-letter code: Formamidopyrimidine-DNA glycosylase (276 aa).

Pro2 (schiff-base intermediate with DNA) is an active-site residue. Glu3 acts as the Proton donor in catalysis. Lys60 functions as the Proton donor; for beta-elimination activity in the catalytic mechanism. 2 residues coordinate DNA: His93 and Arg112. The FPG-type zinc-finger motif lies at 240 to 274 (NVYGKKGEPCVTCGTILEKTVVGGRGTHYCPICQP). Arg264 (proton donor; for delta-elimination activity) is an active-site residue.

The protein belongs to the FPG family. Monomer. Requires Zn(2+) as cofactor.

It catalyses the reaction Hydrolysis of DNA containing ring-opened 7-methylguanine residues, releasing 2,6-diamino-4-hydroxy-5-(N-methyl)formamidopyrimidine.. The enzyme catalyses 2'-deoxyribonucleotide-(2'-deoxyribose 5'-phosphate)-2'-deoxyribonucleotide-DNA = a 3'-end 2'-deoxyribonucleotide-(2,3-dehydro-2,3-deoxyribose 5'-phosphate)-DNA + a 5'-end 5'-phospho-2'-deoxyribonucleoside-DNA + H(+). Functionally, involved in base excision repair of DNA damaged by oxidation or by mutagenic agents. Acts as a DNA glycosylase that recognizes and removes damaged bases. Has a preference for oxidized purines, such as 7,8-dihydro-8-oxoguanine (8-oxoG). Has AP (apurinic/apyrimidinic) lyase activity and introduces nicks in the DNA strand. Cleaves the DNA backbone by beta-delta elimination to generate a single-strand break at the site of the removed base with both 3'- and 5'-phosphates. The protein is Formamidopyrimidine-DNA glycosylase of Bacillus cereus (strain ATCC 14579 / DSM 31 / CCUG 7414 / JCM 2152 / NBRC 15305 / NCIMB 9373 / NCTC 2599 / NRRL B-3711).